The chain runs to 155 residues: FHA domain-containing protein FhaB (155 aa).

A helical membrane pass occupies residues L6–L28. Residue T36 is modified to Phosphothreonine. The FHA domain maps to V83–V132.

Phosphorylated by PknB. Dephosphorylated by PstP.

It localises to the cell membrane. This chain is FHA domain-containing protein FhaB (fhaB), found in Mycobacterium tuberculosis (strain CDC 1551 / Oshkosh).